Here is a 342-residue protein sequence, read N- to C-terminus: Thiosulfate/3-mercaptopyruvate sulfurtransferase 2 (342 aa).

Rhodanese domains follow at residues 56 to 173 (GDAD…DVES) and 224 to 338 (EDKT…LPIV). Cysteine 298 (cysteine persulfide intermediate) is an active-site residue.

Expressed in roots, rosette and cauline leaves, stems, flowers and siliques.

Its subcellular location is the cytoplasm. The catalysed reaction is thiosulfate + hydrogen cyanide = thiocyanate + sulfite + 2 H(+). The enzyme catalyses 2-oxo-3-sulfanylpropanoate + [thioredoxin]-dithiol = [thioredoxin]-disulfide + hydrogen sulfide + pyruvate + H(+). Its function is as follows. Catalyzes the transfer of a sulfur ion from a donor to cyanide or to other thiol compounds. Substrate preference is 3-mercaptopyruvate &gt; thiosulfate. Involved in embryo and seed development. The protein is Thiosulfate/3-mercaptopyruvate sulfurtransferase 2 (STR2) of Arabidopsis thaliana (Mouse-ear cress).